The following is a 616-amino-acid chain: Spastin (616 aa).

Residues 1 to 44 are disordered; it reads MNSPGGRGKKKGSGGPSSPVPPRPPPPCLASSRPAPRPAPPPQS. The segment at 1 to 50 is required for nuclear localization; the sequence is MNSPGGRGKKKGSGGPSSPVPPRPPPPCLASSRPAPRPAPPPQSPHKRNL. The Cytoplasmic segment spans residues 1-56; that stretch reads MNSPGGRGKKKGSGGPSSPVPPRPPPPCLASSRPAPRPAPPPQSPHKRNLYYFSYP. A required for interaction with ATL1 region spans residues 1–80; the sequence is MNSPGGRGKK…LGLLFVWLCQ (80 aa). A required for midbody localization region spans residues 1 to 194; the sequence is MNSPGGRGKK…LVMAKDRLQL (194 aa). A required for interaction with RTN1 region spans residues 1–300; the sequence is MNSPGGRGKK…STPKTNRTNK (300 aa). The Nuclear localization signal motif lies at 4–11; it reads PGGRGKKK. 2 stretches are compositionally biased toward pro residues: residues 18–28 and 35–44; these read SPVPPRPPPPC and APRPAPPPQS. The tract at residues 50 to 87 is required for interaction with SSNA1 and microtubules; it reads LYYFSYPLFLGFALLRLVAFHLGLLFVWLCQRFSRALM. Positions 57–77 form an intramembrane region, helical; the sequence is LFLGFALLRLVAFHLGLLFVW. Residues 59–67 carry the Nuclear export signal motif; it reads LGFALLRLV. Topologically, residues 78–616 are cytoplasmic; sequence LCQRFSRALM…WNKDFGDTTV (539 aa). The tract at residues 112–196 is sufficient for interaction with CHMP1B; sequence EVERVRAFHK…MAKDRLQLLE (85 aa). Residues 114–200 form a required for interaction with microtubules region; that stretch reads ERVRAFHKQA…RLQLLEKLQP (87 aa). An MIT domain is found at 120–195; the sequence is HKQAFEYISV…VMAKDRLQLL (76 aa). The interval 223 to 266 is disordered; that stretch reads GHLQSESGAVPKRKDPLTHPSNSLPRSKAIMKTGSTGLSGHHRA. The tract at residues 226-328 is sufficient for interaction with microtubules; that stretch reads QSESGAVPKR…NVDSNLANFI (103 aa). Residues 228–616 form a sufficient for microtubule severing region; sequence ESGAVPKRKD…WNKDFGDTTV (389 aa). Residues Ser245 and Ser268 each carry the phosphoserine modification. Positions 270-328 are required for interaction with microtubules and microtubule severing; sequence SGLSIVSGMRQGPGPTTATHKSTPKTNRTNKPSTPTTAPRKKKDLKNFRNVDSNLANFI. Residues 278-311 are disordered; sequence MRQGPGPTTATHKSTPKTNRTNKPSTPTTAPRKK. Positions 283–306 are enriched in polar residues; sequence GPTTATHKSTPKTNRTNKPSTPTT. The residue at position 306 (Thr306) is a Phosphothreonine. Residues 309–312 carry the Nuclear localization signal motif; sequence RKKK. Residues 310–312 form a required for interaction with microtubules region; sequence KKK. 382 to 389 is a binding site for ATP; that stretch reads GPPGNGKT. Ser597 carries the post-translational modification Phosphoserine.

Belongs to the AAA ATPase family. Spastin subfamily. In terms of assembly, homohexamer. Mostly monomeric, but assembles into hexameric structure for short periods of time. Oligomerization seems to be a prerequisite for catalytic activity. Binding to ATP in a cleft between two adjacent subunits stabilizes the homohexameric form. Binds to microtubules at least in part via the alpha-tubulin and beta-tubulin tails. The hexamer adopts a ring conformation through which microtubules pass prior to being severed. Does not interact strongly with tubulin heterodimers. Interacts (via MIT domain) with CHMP1B; the interaction is direct. Interacts with SSNA1. Interacts with ATL1. Interacts with RTN1. Interacts with ZFYVE27. Interacts with REEP1. Interacts (via MIT domain) with IST1.

The protein localises to the membrane. Its subcellular location is the endoplasmic reticulum. The protein resides in the midbody. It localises to the cytoplasm. It is found in the cytoskeleton. The protein localises to the microtubule organizing center. Its subcellular location is the centrosome. The protein resides in the perinuclear region. It localises to the nucleus. It is found in the spindle. The protein localises to the cell projection. Its subcellular location is the axon. The enzyme catalyses n ATP + n H2O + a microtubule = n ADP + n phosphate + (n+1) alpha/beta tubulin heterodimers.. With respect to regulation, allosteric enzyme with a cooperative mechanism; at least two neighbor subunits influence each other strongly in spastin hexamers. Microtubule binding promotes cooperative interactions among spastin subunits. Its function is as follows. ATP-dependent microtubule severing protein that specifically recognizes and cuts microtubules that are polyglutamylated. Preferentially recognizes and acts on microtubules decorated with short polyglutamate tails: severing activity increases as the number of glutamates per tubulin rises from one to eight, but decreases beyond this glutamylation threshold. Severing activity is not dependent on tubulin acetylation or detyrosination. Microtubule severing promotes reorganization of cellular microtubule arrays and the release of microtubules from the centrosome following nucleation. It is critical for the biogenesis and maintenance of complex microtubule arrays in axons, spindles and cilia. SPAST is involved in abscission step of cytokinesis and nuclear envelope reassembly during anaphase in cooperation with the ESCRT-III complex. Recruited at the midbody, probably by IST1, and participates in membrane fission during abscission together with the ESCRT-III complex. Recruited to the nuclear membrane by IST1 and mediates microtubule severing, promoting nuclear envelope sealing and mitotic spindle disassembly during late anaphase. Required for membrane traffic from the endoplasmic reticulum (ER) to the Golgi and endosome recycling. Recruited by IST1 to endosomes and regulates early endosomal tubulation and recycling by mediating microtubule severing. Probably plays a role in axon growth and the formation of axonal branches. The protein is Spastin of Sus scrofa (Pig).